A 62-amino-acid polypeptide reads, in one-letter code: Small ribosomal subunit protein eS27 (62 aa).

The Zn(2+) site is built by Cys-17, Cys-20, Cys-36, and Cys-39. The C4-type zinc finger occupies 17–39; the sequence is CPDCDNEQTVFSKASTTVKCVVC.

It belongs to the eukaryotic ribosomal protein eS27 family. Part of the 30S ribosomal subunit. Zn(2+) serves as cofactor.

This chain is Small ribosomal subunit protein eS27, found in Methanoregula boonei (strain DSM 21154 / JCM 14090 / 6A8).